The primary structure comprises 144 residues: Flagellar assembly factor FliW (144 aa).

This sequence belongs to the FliW family. As to quaternary structure, interacts with translational regulator CsrA and flagellin(s).

The protein resides in the cytoplasm. Functionally, acts as an anti-CsrA protein, binds CsrA and prevents it from repressing translation of its target genes, one of which is flagellin. Binds to flagellin and participates in the assembly of the flagellum. This Bacillus pumilus (strain SAFR-032) protein is Flagellar assembly factor FliW.